Reading from the N-terminus, the 737-residue chain is MIDDSSLTAEMEEEESPATTIVPREPPKIQRLEESVVNRIAAGEVIQRPVSAVKELVENSLDADSSSISVVVKDGGLKLIQVSDDGHGIRREDLPILCERHTTSKLTKFEDLFSLSSMGFRGEALASMTYVAHVTVTTITKGQIHGYRVSYRDGVMEHEPKACAAVKGTQIMVENLFYNMIARRKTLQNSADDYGKIVDLLSRMAIHYNNVSFSCRKHGAVKADVHSVVSPSRLDSIRSVYGVSVAKNLMKVEVSSCDSSGCTFDMEGFISNSNYVAKKTILVLFINDRLVECSALKRAIEIVYAATLPKASKPFVYMSINLPREHVDINIHPTKKEVSLLNQEIIIEMIQSEVEVKLRNANDTRTFQEQKVEYIQSTLTSQKSDSPVSQKPSGQKTQKVPVNKMVRTDSSDPAGRLHAFLQPKPQSLPDKVSSLSVVRSSVRQRRNPKETADLSSVQELIAGVDSCCHPGMLETVRNCTYVGMADDVFALVQYNTHLYLANVVNLSKELMYQQTLRRFAHFNAIQLSDPAPLSELILLALKEEDLDPGNDTKDDLKERIAEMNTELLKEKAEMLEEYFSVHIDSSANLSRLPVILDQYTPDMDRVPEFLLCLGNDVEWEDEKSCFQGVSAAIGNFYAMHPPLLPNPSGDGIQFYSKRGESSQEKSDLEGNVDMEDNLDQDLLSDAENAWAQREWSIQHVLFPSMRLFLKPPASMASNGTFVKVASLEKLYKIFERC.

Disordered stretches follow at residues 1-21 and 378-416; these read MIDD…ATTI and TLTS…PAGR. Over residues 378–400 the composition is skewed to polar residues; sequence TLTSQKSDSPVSQKPSGQKTQKV.

This sequence belongs to the DNA mismatch repair MutL/HexB family. As to quaternary structure, heterodimer of MLH1 and PMS1, called MutLalpha, which is the major MMR MutL activity correcting base-base mismatches as well as IDLs. The heterodimer binds double strand DNA independently of a mismatch with positive cooperativity and has more than one DNA binding site. Heterodimer of MLH1 and MLH3, called MutLbeta, which is involved in correction of a specific subset of IDLs when associated with MutSbeta. Ubiquitous.

The protein resides in the nucleus. In terms of biological role, involved in DNA mismatch repair (MMR), correcting insertion-deletion loops (IDLs) resulting from DNA replication, DNA damage or from recombination events between non-identical sequences during meiosis. Component of the MutLbeta heterodimer, which probably forms a ternary complex with the MutSbeta heterodimer that initially recognizes the DNA mismatches. This complex is thought to be responsible for directing the downstream MMR events, including strand discrimination, excision, and resynthesis. Plays a major role in promoting meiotic crossing-over and is involved in maintaining the genetic stability of simple sequence repeats by correction of frameshift intermediates. This chain is DNA mismatch repair protein MLH1 (MLH1), found in Arabidopsis thaliana (Mouse-ear cress).